The chain runs to 223 residues: Voltage-dependent calcium channel gamma-1 subunit (223 aa).

Residues 1 to 10 lie on the Cytoplasmic side of the membrane; the sequence is MSQTKTAKVR. Residues 11–29 form a helical membrane-spanning segment; the sequence is VTLFFILVGGVLAMVAVVT. Topologically, residues 30-109 are extracellular; the sequence is DHWAVLSPHL…TQKEYSISAA (80 aa). Residues Asn-43 and Asn-80 are each glycosylated (N-linked (GlcNAc...) asparagine). Residues Cys-57 and Cys-81 are joined by a disulfide bond. Residues 110 to 130 traverse the membrane as a helical segment; the sequence is AIAIFSLGFIIVGSICAFLSF. The Cytoplasmic portion of the chain corresponds to 131 to 135; it reads GNKRD. A helical membrane pass occupies residues 136 to 156; the sequence is YLLRPASMFYAFAGLCLIVSV. At 157-180 the chain is on the extracellular side; it reads EVMRQSVKRMIDSEDTVWIEHYYS. The chain crosses the membrane as a helical span at residues 181-205; sequence WSFACACAAFILLFLGGLFLLLFSL. The Cytoplasmic portion of the chain corresponds to 206–223; sequence PRMPQNPWESCMDAEPEH.

Belongs to the PMP-22/EMP/MP20 family. CACNG subfamily. Component of a calcium channel complex consisting of a pore-forming alpha subunit (CACNA1S) and the ancillary subunits CACNB1 or CACNB2, CACNG1 and CACNA2D1. The channel complex contains alpha, beta, gamma and delta subunits in a 1:1:1:1 ratio, i.e. it contains either CACNB1 or CACNB2. Post-translationally, N-glycosylated. As to expression, detected in skeletal muscle (at protein level).

It localises to the cell membrane. The protein localises to the sarcolemma. Functionally, regulatory subunit of the voltage-gated calcium channel that gives rise to L-type calcium currents in skeletal muscle. Regulates channel inactivation kinetics. The protein is Voltage-dependent calcium channel gamma-1 subunit (Cacng1) of Mus musculus (Mouse).